The following is a 227-amino-acid chain: Cytochrome c oxidase subunit 2 (227 aa).

Over 1–14 (MAYPFQLGLQDATS) the chain is Mitochondrial intermembrane. Residues 15–45 (PIMEELLHFHDHTLMIVFLISSLVLYIISLM) traverse the membrane as a helical segment. Over 46 to 59 (LTTKLTHTSTMDAQ) the chain is Mitochondrial matrix. The chain crosses the membrane as a helical span at residues 60–87 (EVETVWTILPAIILILIALPSLRILYMM). Topologically, residues 88-227 (DEINNPSLTV…YFETWSAVMV (140 aa)) are mitochondrial intermembrane. Cu cation contacts are provided by histidine 161, cysteine 196, glutamate 198, cysteine 200, histidine 204, and methionine 207. Residue glutamate 198 coordinates Mg(2+). Tyrosine 218 is subject to Phosphotyrosine.

It belongs to the cytochrome c oxidase subunit 2 family. In terms of assembly, component of the cytochrome c oxidase (complex IV, CIV), a multisubunit enzyme composed of 14 subunits. The complex is composed of a catalytic core of 3 subunits MT-CO1, MT-CO2 and MT-CO3, encoded in the mitochondrial DNA, and 11 supernumerary subunits COX4I, COX5A, COX5B, COX6A, COX6B, COX6C, COX7A, COX7B, COX7C, COX8 and NDUFA4, which are encoded in the nuclear genome. The complex exists as a monomer or a dimer and forms supercomplexes (SCs) in the inner mitochondrial membrane with NADH-ubiquinone oxidoreductase (complex I, CI) and ubiquinol-cytochrome c oxidoreductase (cytochrome b-c1 complex, complex III, CIII), resulting in different assemblies (supercomplex SCI(1)III(2)IV(1) and megacomplex MCI(2)III(2)IV(2)). Found in a complex with TMEM177, COA6, COX18, COX20, SCO1 and SCO2. Interacts with TMEM177 in a COX20-dependent manner. Interacts with COX20. Interacts with COX16. Cu cation is required as a cofactor.

The protein resides in the mitochondrion inner membrane. It carries out the reaction 4 Fe(II)-[cytochrome c] + O2 + 8 H(+)(in) = 4 Fe(III)-[cytochrome c] + 2 H2O + 4 H(+)(out). In terms of biological role, component of the cytochrome c oxidase, the last enzyme in the mitochondrial electron transport chain which drives oxidative phosphorylation. The respiratory chain contains 3 multisubunit complexes succinate dehydrogenase (complex II, CII), ubiquinol-cytochrome c oxidoreductase (cytochrome b-c1 complex, complex III, CIII) and cytochrome c oxidase (complex IV, CIV), that cooperate to transfer electrons derived from NADH and succinate to molecular oxygen, creating an electrochemical gradient over the inner membrane that drives transmembrane transport and the ATP synthase. Cytochrome c oxidase is the component of the respiratory chain that catalyzes the reduction of oxygen to water. Electrons originating from reduced cytochrome c in the intermembrane space (IMS) are transferred via the dinuclear copper A center (CU(A)) of subunit 2 and heme A of subunit 1 to the active site in subunit 1, a binuclear center (BNC) formed by heme A3 and copper B (CU(B)). The BNC reduces molecular oxygen to 2 water molecules using 4 electrons from cytochrome c in the IMS and 4 protons from the mitochondrial matrix. This Lycalopex vetulus (Hoary fox) protein is Cytochrome c oxidase subunit 2 (MT-CO2).